The chain runs to 130 residues: Small ribosomal subunit protein uS9 (130 aa).

It belongs to the universal ribosomal protein uS9 family.

The polypeptide is Small ribosomal subunit protein uS9 (Brevibacillus brevis (strain 47 / JCM 6285 / NBRC 100599)).